Here is a 377-residue protein sequence, read N- to C-terminus: Glutamate 5-kinase (377 aa).

Lysine 22 is an ATP binding site. The substrate site is built by serine 62, aspartate 149, and asparagine 161. Residues 181–182 and 223–229 each bind ATP; these read TD and TGGMVTK. In terms of domain architecture, PUA spans 285-363; the sequence is RGTIVVDAGA…AQLKRFLGPQ (79 aa).

This sequence belongs to the glutamate 5-kinase family.

It localises to the cytoplasm. The enzyme catalyses L-glutamate + ATP = L-glutamyl 5-phosphate + ADP. The protein operates within amino-acid biosynthesis; L-proline biosynthesis; L-glutamate 5-semialdehyde from L-glutamate: step 1/2. Its function is as follows. Catalyzes the transfer of a phosphate group to glutamate to form L-glutamate 5-phosphate. The chain is Glutamate 5-kinase from Bifidobacterium longum (strain DJO10A).